Here is a 216-residue protein sequence, read N- to C-terminus: Deoxyribose-phosphate aldolase (216 aa).

Asp-89 (proton donor/acceptor) is an active-site residue. Lys-152 functions as the Schiff-base intermediate with acetaldehyde in the catalytic mechanism. Lys-181 (proton donor/acceptor) is an active-site residue.

Belongs to the DeoC/FbaB aldolase family. DeoC type 1 subfamily.

The protein localises to the cytoplasm. It carries out the reaction 2-deoxy-D-ribose 5-phosphate = D-glyceraldehyde 3-phosphate + acetaldehyde. It functions in the pathway carbohydrate degradation; 2-deoxy-D-ribose 1-phosphate degradation; D-glyceraldehyde 3-phosphate and acetaldehyde from 2-deoxy-alpha-D-ribose 1-phosphate: step 2/2. Functionally, catalyzes a reversible aldol reaction between acetaldehyde and D-glyceraldehyde 3-phosphate to generate 2-deoxy-D-ribose 5-phosphate. The polypeptide is Deoxyribose-phosphate aldolase (Clostridium tetani (strain Massachusetts / E88)).